Here is a 240-residue protein sequence, read N- to C-terminus: Proline-rich antigen homolog (240 aa).

Composition is skewed to pro residues over residues 1 to 31 and 38 to 78; these read MTEQPPPGGSYPPPPPPPGPSGGHEPPPAAP and APPP…PPGP. A disordered region spans residues 1–78; the sequence is MTEQPPPGGS…GGYAPPPPGP (78 aa). Residues 89–233 form the RDD domain; it reads TPWITRVLAA…KRQTLADKIM (145 aa). Transmembrane regions (helical) follow at residues 98-118, 142-162, and 203-223; these read AFIDWAPYVVLVGIGWVIMLV, SMIGQLVQWLLSVGGLAYLVW, and LAHFIDAIICFVGFLFPLWDA.

It belongs to the mycobacterial Pra family.

The protein localises to the cell membrane. The protein is Proline-rich antigen homolog of Mycobacterium tuberculosis (strain CDC 1551 / Oshkosh).